A 257-amino-acid chain; its full sequence is Imidazole glycerol phosphate synthase subunit HisF (257 aa).

Residues aspartate 12 and aspartate 131 contribute to the active site.

Belongs to the HisA/HisF family. In terms of assembly, heterodimer of HisH and HisF.

It localises to the cytoplasm. It carries out the reaction 5-[(5-phospho-1-deoxy-D-ribulos-1-ylimino)methylamino]-1-(5-phospho-beta-D-ribosyl)imidazole-4-carboxamide + L-glutamine = D-erythro-1-(imidazol-4-yl)glycerol 3-phosphate + 5-amino-1-(5-phospho-beta-D-ribosyl)imidazole-4-carboxamide + L-glutamate + H(+). Its pathway is amino-acid biosynthesis; L-histidine biosynthesis; L-histidine from 5-phospho-alpha-D-ribose 1-diphosphate: step 5/9. In terms of biological role, IGPS catalyzes the conversion of PRFAR and glutamine to IGP, AICAR and glutamate. The HisF subunit catalyzes the cyclization activity that produces IGP and AICAR from PRFAR using the ammonia provided by the HisH subunit. The chain is Imidazole glycerol phosphate synthase subunit HisF from Marinobacter nauticus (strain ATCC 700491 / DSM 11845 / VT8) (Marinobacter aquaeolei).